Consider the following 111-residue polypeptide: Fluoride-specific ion channel FluC (111 aa).

A run of 3 helical transmembrane segments spans residues 2-22 (GLLLLLVGIGGGFGAMARFAL), 36-56 (GILLCNIIGSLIIGMMAAFLI), and 71-91 (FLLVTGFLGGFTTFSSFSLDI). Residues glycine 79 and threonine 82 each coordinate Na(+).

This sequence belongs to the fluoride channel Fluc/FEX (TC 1.A.43) family.

The protein localises to the cell inner membrane. It carries out the reaction fluoride(in) = fluoride(out). Its activity is regulated as follows. Na(+) is not transported, but it plays an essential structural role and its presence is essential for fluoride channel function. Its function is as follows. Fluoride-specific ion channel. Important for reducing fluoride concentration in the cell, thus reducing its toxicity. The polypeptide is Fluoride-specific ion channel FluC (Francisella tularensis subsp. holarctica (strain FTNF002-00 / FTA)).